Reading from the N-terminus, the 262-residue chain is Acyl-[acyl-carrier-protein]--UDP-N-acetylglucosamine O-acyltransferase (262 aa).

Belongs to the transferase hexapeptide repeat family. LpxA subfamily. In terms of assembly, homotrimer.

The protein resides in the cytoplasm. It carries out the reaction a (3R)-hydroxyacyl-[ACP] + UDP-N-acetyl-alpha-D-glucosamine = a UDP-3-O-[(3R)-3-hydroxyacyl]-N-acetyl-alpha-D-glucosamine + holo-[ACP]. Its pathway is glycolipid biosynthesis; lipid IV(A) biosynthesis; lipid IV(A) from (3R)-3-hydroxytetradecanoyl-[acyl-carrier-protein] and UDP-N-acetyl-alpha-D-glucosamine: step 1/6. In terms of biological role, involved in the biosynthesis of lipid A, a phosphorylated glycolipid that anchors the lipopolysaccharide to the outer membrane of the cell. This is Acyl-[acyl-carrier-protein]--UDP-N-acetylglucosamine O-acyltransferase from Pasteurella multocida (strain Pm70).